The chain runs to 502 residues: ATP synthase subunit alpha (502 aa).

169 to 176 (GDRQTGKT) contacts ATP.

Belongs to the ATPase alpha/beta chains family. F-type ATPases have 2 components, CF(1) - the catalytic core - and CF(0) - the membrane proton channel. CF(1) has five subunits: alpha(3), beta(3), gamma(1), delta(1), epsilon(1). CF(0) has three main subunits: a(1), b(2) and c(9-12). The alpha and beta chains form an alternating ring which encloses part of the gamma chain. CF(1) is attached to CF(0) by a central stalk formed by the gamma and epsilon chains, while a peripheral stalk is formed by the delta and b chains.

Its subcellular location is the cell membrane. The catalysed reaction is ATP + H2O + 4 H(+)(in) = ADP + phosphate + 5 H(+)(out). Its function is as follows. Produces ATP from ADP in the presence of a proton gradient across the membrane. The alpha chain is a regulatory subunit. The polypeptide is ATP synthase subunit alpha (Bacillus velezensis (strain DSM 23117 / BGSC 10A6 / LMG 26770 / FZB42) (Bacillus amyloliquefaciens subsp. plantarum)).